A 110-amino-acid polypeptide reads, in one-letter code: Small ribosomal subunit protein bS18 (110 aa).

Residues 1–18 show a composition bias toward low complexity; sequence MSEATTTTTTTSAPRPGG. A disordered region spans residues 1–41; the sequence is MSEATTTTTTTSAPRPGGRPSGPRPDRGPGGPRKKRPFQRR. Residues 32 to 41 show a composition bias toward basic residues; that stretch reads PRKKRPFQRR.

This sequence belongs to the bacterial ribosomal protein bS18 family. As to quaternary structure, part of the 30S ribosomal subunit. Forms a tight heterodimer with protein bS6.

In terms of biological role, binds as a heterodimer with protein bS6 to the central domain of the 16S rRNA, where it helps stabilize the platform of the 30S subunit. The protein is Small ribosomal subunit protein bS18 of Trichlorobacter lovleyi (strain ATCC BAA-1151 / DSM 17278 / SZ) (Geobacter lovleyi).